The chain runs to 204 residues: Large ribosomal subunit protein bL25 (204 aa).

The segment at 1 to 20 (MSETYELKAETRDRVGKGSS) is disordered.

It belongs to the bacterial ribosomal protein bL25 family. CTC subfamily. Part of the 50S ribosomal subunit; part of the 5S rRNA/L5/L18/L25 subcomplex. Contacts the 5S rRNA. Binds to the 5S rRNA independently of L5 and L18.

This is one of the proteins that binds to the 5S RNA in the ribosome where it forms part of the central protuberance. This chain is Large ribosomal subunit protein bL25, found in Rhizobium meliloti (strain 1021) (Ensifer meliloti).